An 877-amino-acid polypeptide reads, in one-letter code: Alanine--tRNA ligase (877 aa).

Residues H566, H570, C668, and H672 each coordinate Zn(2+).

The protein belongs to the class-II aminoacyl-tRNA synthetase family. Requires Zn(2+) as cofactor.

It is found in the cytoplasm. The catalysed reaction is tRNA(Ala) + L-alanine + ATP = L-alanyl-tRNA(Ala) + AMP + diphosphate. Its function is as follows. Catalyzes the attachment of alanine to tRNA(Ala) in a two-step reaction: alanine is first activated by ATP to form Ala-AMP and then transferred to the acceptor end of tRNA(Ala). Also edits incorrectly charged Ser-tRNA(Ala) and Gly-tRNA(Ala) via its editing domain. The sequence is that of Alanine--tRNA ligase from Staphylococcus aureus (strain USA300 / TCH1516).